The sequence spans 207 residues: Ras-related protein Rab-8A (207 aa).

Positions 17, 18, 19, 20, 21, 22, 23, 35, 39, and 40 each coordinate GTP. Residue threonine 22 participates in Mg(2+) binding. 2 consecutive short sequence motifs (switch) follow at residues 31 to 45 (DAFN…GIDF) and 63 to 80 (DTAG…YYRG). Positions 40 and 63 each coordinate Mg(2+). Glycine 66 serves as a coordination point for GTP. Position 72 is a phosphothreonine (threonine 72). Positions 121, 122, 124, 152, and 153 each coordinate GTP. Serine 181 and serine 185 each carry phosphoserine. Cysteine 204 is modified (cysteine methyl ester). The S-geranylgeranyl cysteine moiety is linked to residue cysteine 204. Positions 205–207 (VLL) are cleaved as a propeptide — removed in mature form.

Belongs to the small GTPase superfamily. Rab family. In terms of assembly, interacts (GTP-bound form) with MICALL1; regulates RAB8A association with recycling endosomes. Interacts with MICALL2; competes with RAB13 and is involved in E-cadherin endocytic recycling. Interacts (GTP-bound form) with MICAL1, MICALCL, MICAL3, EHBP1 and EHBP1L1; at least in case of MICAL1, MICALCL, MICAL3 and EHBP1L1 two molecules of RAB8A can bind to one molecule of the effector protein; ternary complexes of RAB8A, RAB13 and either MICAL1 or EHBP1L1 are possible. Interacts with EHD1. Interacts with MAP4K2 and SYTL4. Interacts with SGSM1 and SGSM3. Interacts with RABIF, RIMS2, RPH3A and RPH3A. Interacts with OPTN. Interacts with RAB3IP, RAB3IP functions as guanine exchange factor (GEF). Interacts with MYO5B. Interacts with CIMAP3. Interacts with BIRC6/bruce. Interacts with OCRL. Interacts with AHI1. Interacts with DCDC1. Interacts with LRRK2; interaction facilitates phosphorylation of Thr-72. Interacts with RAB31P, GDI1, GDI2, CHM, CHML, RABGGTA, RABGGTB, TBC1D15 and INPP5B; these interactions are dependent on Thr-72 not being phosphorylated. Interacts with RILPL1 and RILPL2; these interactions are dependent on the phosphorylation of Thr-72 by LRRK2. Interacts with DZIP1; prevents inhibition by the GDP-dissociation inhibitor GDI2. Interacts (in GDP-bound form) with RAB3IP/Rabin8, RAB3IP functions as guanine exchange factor (GEF) towards RAB8A. Interacts (in GDP-bound form) with RPGR, RPGR functions as GEF towards RAB8A. Requires Mg(2+) as cofactor. In terms of processing, phosphorylation of Thr-72 in the switch II region by LRRK2 prevents the association of RAB regulatory proteins, including CHM, CHML and RAB GDP dissociation inhibitors GDI1 and GDI2. Phosphorylation by LRRK2 is required for localization to stressed lysosomes.

The protein resides in the cell membrane. It localises to the golgi apparatus. Its subcellular location is the endosome membrane. The protein localises to the recycling endosome membrane. It is found in the cell projection. The protein resides in the cilium. It localises to the cytoplasmic vesicle. Its subcellular location is the phagosome membrane. The protein localises to the cytoplasm. It is found in the cytoskeleton. The protein resides in the microtubule organizing center. It localises to the centrosome. Its subcellular location is the centriole. The protein localises to the cilium basal body. It is found in the midbody. The protein resides in the lysosome. It catalyses the reaction GTP + H2O = GDP + phosphate + H(+). With respect to regulation, regulated by guanine nucleotide exchange factors (GEFs) such as RAB3IP/Rabin8 and RPGR which promote the exchange of bound GDP for free GTP, GTPase activating proteins (GAPs) which increase the GTP hydrolysis activity, and GDP dissociation inhibitors (GDIs) which inhibit the dissociation of the nucleotide from the GTPase. Activated in response to insulin. The small GTPases Rab are key regulators of intracellular membrane trafficking, from the formation of transport vesicles to their fusion with membranes. Rabs cycle between an inactive GDP-bound form and an active GTP-bound form that is able to recruit to membranes different sets of downstream effectors directly responsible for vesicle formation, movement, tethering and fusion. RAB8A is involved in polarized vesicular trafficking and neurotransmitter release. Together with RAB11A, RAB3IP, the exocyst complex, PARD3, PRKCI, ANXA2, CDC42 and DNMBP promotes transcytosis of PODXL to the apical membrane initiation sites (AMIS), apical surface formation and lumenogenesis. Regulates the compacted morphology of the Golgi. Together with MYO5B and RAB11A participates in epithelial cell polarization. Also involved in membrane trafficking to the cilium and ciliogenesis. Together with MICALL2, may also regulate adherens junction assembly. May play a role in insulin-induced transport to the plasma membrane of the glucose transporter GLUT4 and therefore play a role in glucose homeostasis. Involved in autophagy. Participates in the export of a subset of neosynthesized proteins through a Rab8-Rab10-Rab11-dependent endososomal export route. Targeted to and stabilized on stressed lysosomes through LRRK2 phosphorylation. Suppresses stress-induced lysosomal enlargement through EHBP1 and EHNP1L1 effector proteins. In Pongo abelii (Sumatran orangutan), this protein is Ras-related protein Rab-8A (RAB8A).